A 101-amino-acid polypeptide reads, in one-letter code: NAD(P)H-quinone oxidoreductase subunit 4L, chloroplastic (101 aa).

The next 3 helical transmembrane spans lie at 2–22 (MLEH…YGLI), 32–52 (MCLE…SDLF), and 61–81 (IFSI…LAII).

Belongs to the complex I subunit 4L family. NDH is composed of at least 16 different subunits, 5 of which are encoded in the nucleus.

The protein resides in the plastid. It is found in the chloroplast thylakoid membrane. It carries out the reaction a plastoquinone + NADH + (n+1) H(+)(in) = a plastoquinol + NAD(+) + n H(+)(out). It catalyses the reaction a plastoquinone + NADPH + (n+1) H(+)(in) = a plastoquinol + NADP(+) + n H(+)(out). Its function is as follows. NDH shuttles electrons from NAD(P)H:plastoquinone, via FMN and iron-sulfur (Fe-S) centers, to quinones in the photosynthetic chain and possibly in a chloroplast respiratory chain. The immediate electron acceptor for the enzyme in this species is believed to be plastoquinone. Couples the redox reaction to proton translocation, and thus conserves the redox energy in a proton gradient. This chain is NAD(P)H-quinone oxidoreductase subunit 4L, chloroplastic, found in Ranunculus macranthus (Large buttercup).